A 710-amino-acid polypeptide reads, in one-letter code: Interferon-induced GTP-binding protein Mx2 (710 aa).

The tract at residues 1-87 (MSLSFRPLKY…RSKGPENNLY (87 aa)) is disordered. Composition is skewed to polar residues over residues 39–50 (QTMSPPQWQVEE) and 58–79 (NNFS…QQRS). The Dynamin-type G domain maps to 112-383 (DLALPAIAVI…LIWHINKSLP (272 aa)). The interval 122–129 (GDQSSGKS) is G1 motif. GTP is bound at residue 122-129 (GDQSSGKS). The G2 motif stretch occupies residues 147–149 (ITR). The interval 221-224 (DLPG) is G3 motif. GTP-binding positions include 221-225 (DLPGI) and 290-293 (TKPD). The G4 motif stretch occupies residues 290–293 (TKPD). Residues 322-325 (KCRG) are G5 motif. The GED domain occupies 619 to 710 (IVEIGVHLNA…ALYEFPHFKG (92 aa)).

It belongs to the TRAFAC class dynamin-like GTPase superfamily. Dynamin/Fzo/YdjA family.

Its subcellular location is the cytoplasm. It is found in the nucleus. Functionally, interferon-induced dynamin-like GTPase with antiviral activity against vesicular stomatitis virus (VSV). The chain is Interferon-induced GTP-binding protein Mx2 (MX2) from Bubalus bubalis (Domestic water buffalo).